The chain runs to 251 residues: Ditrans,polycis-undecaprenyl-diphosphate synthase ((2E,6E)-farnesyl-diphosphate specific) (251 aa).

Residue Asp20 is part of the active site. A Mg(2+)-binding site is contributed by Asp20. Residues 21-24 (GNGR), Trp25, Arg33, His37, and 65-67 (SSE) each bind substrate. Asn68 functions as the Proton acceptor in the catalytic mechanism. Residues Trp69, Arg71, Arg188, and 194–196 (RIS) contribute to the substrate site. Residue Glu207 coordinates Mg(2+).

Belongs to the UPP synthase family. Homodimer. Requires Mg(2+) as cofactor.

It catalyses the reaction 8 isopentenyl diphosphate + (2E,6E)-farnesyl diphosphate = di-trans,octa-cis-undecaprenyl diphosphate + 8 diphosphate. Functionally, catalyzes the sequential condensation of isopentenyl diphosphate (IPP) with (2E,6E)-farnesyl diphosphate (E,E-FPP) to yield (2Z,6Z,10Z,14Z,18Z,22Z,26Z,30Z,34E,38E)-undecaprenyl diphosphate (di-trans,octa-cis-UPP). UPP is the precursor of glycosyl carrier lipid in the biosynthesis of bacterial cell wall polysaccharide components such as peptidoglycan and lipopolysaccharide. The protein is Ditrans,polycis-undecaprenyl-diphosphate synthase ((2E,6E)-farnesyl-diphosphate specific) of Vibrio parahaemolyticus serotype O3:K6 (strain RIMD 2210633).